The primary structure comprises 350 residues: Tsukushi (350 aa).

Residues 1–17 form the signal peptide; it reads MAPSWLFLLFIPGMVGS. The LRRNT domain maps to 18–59; sequence SRSCFPGCQCIVDNFGLFHSFSLTKVDCSGVGPHVVPVSIPL. LRR repeat units lie at residues 60–81, 86–107, 110–131, 133–154, 159–180, 183–203, 204–225, 228–250, 253–275, and 278–299; these read DTSYLDLSANGIKRINESVLSG, TLINLNLSHNQIVRISFSTFSK, YLESLDLSHNLLETLPDGSFLY, RLTELDLSSNKLLEVGIGAFTL, RSMTINLGNNNIRSIHRGAERP, NIHSLTLSGNDLLSVPDLHGI, PLRHLDLDRNPLAKIEKESFLG, GLTHLSLSDLPNLREVSPYSFKT, SLLDLDLSSNPQLKSLSSDMFFG, and SLQELNLAYSGVAALPKDIMLN. N-linked (GlcNAc...) asparagine glycosylation is found at Asn-75 and Asn-91.

In terms of assembly, interacts with bmp4. Interacts with dll1 (via extracellular region). Interacts with fgf8; inhibits fgf8 signaling. Interacts with nodal2/Xnr2; enhances nodal2 activity.

It is found in the secreted. In terms of biological role, contributes to various developmental events through its interactions with multiple signaling pathways. Dorsalizing factor which functions as an inhibitor of bone morphogenetic proteins (BMP) during gastrulation. Promotes dll1-dependent activation of Notch signaling and is required for neural crest formation. Induces endoderm and dorsal mesoderm formation by enhancing nodal2/Xnr2 activity while inhibiting ventrolateral mesoderm formation through inhibition of fgf8. The sequence is that of Tsukushi (tsku) from Xenopus tropicalis (Western clawed frog).